The following is a 1569-amino-acid chain: Zinc finger protein GLI3 (1569 aa).

Composition is skewed to polar residues over residues Met-1–Ala-10 and Ala-416–Gly-432. 2 disordered regions span residues Met-1–Ser-79 and Ser-414–Asp-461. C2H2-type zinc fingers lie at residues Thr-485–His-510, Phe-518–His-545, His-551–His-575, Tyr-581–His-606, and Tyr-612–His-637. Disordered regions lie at residues Asp-625 to Ser-731, Ser-899 to Pro-921, Pro-1202 to Asp-1228, and Ser-1335 to Gln-1364. Positions His-637–Pro-653 are enriched in basic and acidic residues. Residues Ser-663–Gly-676 are compositionally biased toward polar residues. Residues His-678 to Lys-704 are compositionally biased toward basic and acidic residues. A compositionally biased stretch (polar residues) spans Pro-705–Ser-731. The segment covering Ser-1335–Thr-1350 has biased composition (low complexity). The span at Ser-1352 to Gln-1364 shows a compositional bias: polar residues.

This sequence belongs to the GLI C2H2-type zinc-finger protein family. Post-translationally, phosphorylation is essential for its proteolytic processing. The repressor form (GLI3R), a C-terminally truncated form is generated from the full-length GLI3 protein (GLI3FL) through proteolytic processing.

It localises to the nucleus. The protein localises to the cytoplasm. Functionally, has a dual function as a transcriptional activator and a repressor of the sonic hedgehog (Shh) pathway, and may play a role in limb development. May bind to the minimal GLI-consensus sequence 5'-GGGTGGTC-3'. Has an essential role in the early embryonic patterning of mesoderm and neuroectoderm. The polypeptide is Zinc finger protein GLI3 (gli3) (Xenopus laevis (African clawed frog)).